Consider the following 293-residue polypeptide: Elongation factor Ts (293 aa).

Residues 80–83 (TDFV) are involved in Mg(2+) ion dislocation from EF-Tu.

This sequence belongs to the EF-Ts family.

Its subcellular location is the cytoplasm. Associates with the EF-Tu.GDP complex and induces the exchange of GDP to GTP. It remains bound to the aminoacyl-tRNA.EF-Tu.GTP complex up to the GTP hydrolysis stage on the ribosome. The protein is Elongation factor Ts of Staphylococcus aureus (strain Newman).